Reading from the N-terminus, the 347-residue chain is Anthranilate phosphoribosyltransferase (347 aa).

5-phospho-alpha-D-ribose 1-diphosphate-binding positions include G88, 91–92 (GD), T96, 98–101 (NIST), 116–124 (KHGNRSVSS), and S128. An anthranilate-binding site is contributed by G88. Position 100 (S100) interacts with Mg(2+). N119 contacts anthranilate. R174 contributes to the anthranilate binding site. Mg(2+) is bound by residues D232 and E233.

The protein belongs to the anthranilate phosphoribosyltransferase family. As to quaternary structure, homodimer. Mg(2+) is required as a cofactor.

It carries out the reaction N-(5-phospho-beta-D-ribosyl)anthranilate + diphosphate = 5-phospho-alpha-D-ribose 1-diphosphate + anthranilate. It participates in amino-acid biosynthesis; L-tryptophan biosynthesis; L-tryptophan from chorismate: step 2/5. In terms of biological role, catalyzes the transfer of the phosphoribosyl group of 5-phosphorylribose-1-pyrophosphate (PRPP) to anthranilate to yield N-(5'-phosphoribosyl)-anthranilate (PRA). This Shewanella sp. (strain ANA-3) protein is Anthranilate phosphoribosyltransferase.